The following is a 228-amino-acid chain: Ribosomal RNA small subunit methyltransferase G (228 aa).

S-adenosyl-L-methionine is bound by residues G70, L75, A120 to E121, and R138. Positions R207–A228 are disordered.

Belongs to the methyltransferase superfamily. RNA methyltransferase RsmG family.

Its subcellular location is the cytoplasm. In terms of biological role, specifically methylates the N7 position of guanine in position 518 of 16S rRNA. This Mycobacterium marinum (strain ATCC BAA-535 / M) protein is Ribosomal RNA small subunit methyltransferase G.